The primary structure comprises 506 residues: Galactose/methyl galactoside import ATP-binding protein MglA (506 aa).

2 ABC transporter domains span residues 14–249 (LEMS…VGRS) and 264–506 (VILE…SLHL). An ATP-binding site is contributed by 46–53 (GENGAGKS).

Belongs to the ABC transporter superfamily. Galactose/methyl galactoside importer (TC 3.A.1.2.3) family. As to quaternary structure, the complex is composed of one ATP-binding protein (MglA), two transmembrane proteins (MglC) and a solute-binding protein (MglB).

Its subcellular location is the cell inner membrane. The enzyme catalyses D-galactose(out) + ATP + H2O = D-galactose(in) + ADP + phosphate + H(+). The catalysed reaction is methyl beta-D-galactoside(out) + ATP + H2O = methyl beta-D-galactoside(in) + ADP + phosphate + H(+). In terms of biological role, part of the ABC transporter complex MglABC involved in galactose/methyl galactoside import. Responsible for energy coupling to the transport system. This Escherichia coli O157:H7 protein is Galactose/methyl galactoside import ATP-binding protein MglA.